We begin with the raw amino-acid sequence, 374 residues long: 4-hydroxy-3-methylbut-2-en-1-yl diphosphate synthase (flavodoxin) (374 aa).

[4Fe-4S] cluster-binding residues include Cys270, Cys273, Cys305, and Glu312.

The protein belongs to the IspG family. The cofactor is [4Fe-4S] cluster.

It catalyses the reaction (2E)-4-hydroxy-3-methylbut-2-enyl diphosphate + oxidized [flavodoxin] + H2O + 2 H(+) = 2-C-methyl-D-erythritol 2,4-cyclic diphosphate + reduced [flavodoxin]. Its pathway is isoprenoid biosynthesis; isopentenyl diphosphate biosynthesis via DXP pathway; isopentenyl diphosphate from 1-deoxy-D-xylulose 5-phosphate: step 5/6. Functionally, converts 2C-methyl-D-erythritol 2,4-cyclodiphosphate (ME-2,4cPP) into 1-hydroxy-2-methyl-2-(E)-butenyl 4-diphosphate. The chain is 4-hydroxy-3-methylbut-2-en-1-yl diphosphate synthase (flavodoxin) from Yersinia enterocolitica serotype O:8 / biotype 1B (strain NCTC 13174 / 8081).